We begin with the raw amino-acid sequence, 599 residues long: Elongation factor 4 (599 aa).

Positions 5–187 (SHIRNFSIIA…VLIKSVPAPV (183 aa)) constitute a tr-type G domain. Residues 17–22 (DHGKST) and 134–137 (NKID) contribute to the GTP site.

It belongs to the TRAFAC class translation factor GTPase superfamily. Classic translation factor GTPase family. LepA subfamily.

It localises to the cell inner membrane. It catalyses the reaction GTP + H2O = GDP + phosphate + H(+). In terms of biological role, required for accurate and efficient protein synthesis under certain stress conditions. May act as a fidelity factor of the translation reaction, by catalyzing a one-codon backward translocation of tRNAs on improperly translocated ribosomes. Back-translocation proceeds from a post-translocation (POST) complex to a pre-translocation (PRE) complex, thus giving elongation factor G a second chance to translocate the tRNAs correctly. Binds to ribosomes in a GTP-dependent manner. In Saccharophagus degradans (strain 2-40 / ATCC 43961 / DSM 17024), this protein is Elongation factor 4.